The chain runs to 307 residues: D-alanine--D-alanine ligase (307 aa).

Positions Arg104 to Glu301 constitute an ATP-grasp domain. Pro130–Thr183 provides a ligand contact to ATP. Residues Asp251, Glu268, and Asn270 each coordinate Mg(2+).

The protein belongs to the D-alanine--D-alanine ligase family. The cofactor is Mg(2+). Requires Mn(2+) as cofactor.

Its subcellular location is the cytoplasm. The catalysed reaction is 2 D-alanine + ATP = D-alanyl-D-alanine + ADP + phosphate + H(+). It functions in the pathway cell wall biogenesis; peptidoglycan biosynthesis. In terms of biological role, cell wall formation. This chain is D-alanine--D-alanine ligase, found in Granulibacter bethesdensis (strain ATCC BAA-1260 / CGDNIH1).